The primary structure comprises 108 residues: Glutaredoxin-1 (108 aa).

A Glutaredoxin domain is found at 3–106 (EEFVQQRLTN…DILSSIGVLR (104 aa)). A disulfide bridge connects residues C23 and C26.

This sequence belongs to the glutaredoxin family.

The protein resides in the virion. Its function is as follows. Displays thioltransferase and dehydroascorbate reductase activities. The protein is Glutaredoxin-1 (OPG075) of Variola virus (isolate Human/India/Ind3/1967) (VARV).